Here is a 439-residue protein sequence, read N- to C-terminus: GTPase Der (439 aa).

EngA-type G domains follow at residues 3–167 (PTVA…DKVG) and 176–351 (IKVA…GNYT). Residues 9–16 (GRPNVGKS), 56–60 (DTGGI), 119–122 (NKID), 182–189 (GKPNTGKS), 229–233 (DTAGL), and 294–297 (NKWD) each bind GTP. A KH-like domain is found at 352–436 (RRITTGQIND…PIVFLIREKG (85 aa)).

This sequence belongs to the TRAFAC class TrmE-Era-EngA-EngB-Septin-like GTPase superfamily. EngA (Der) GTPase family. As to quaternary structure, associates with the 50S ribosomal subunit.

In terms of biological role, GTPase that plays an essential role in the late steps of ribosome biogenesis. This is GTPase Der from Caldicellulosiruptor saccharolyticus (strain ATCC 43494 / DSM 8903 / Tp8T 6331).